The primary structure comprises 319 residues: 4-hydroxy-3-methylbut-2-enyl diphosphate reductase (319 aa).

Cys15 is a binding site for [4Fe-4S] cluster. The (2E)-4-hydroxy-3-methylbut-2-enyl diphosphate site is built by His44 and His77. 2 residues coordinate dimethylallyl diphosphate: His44 and His77. Isopentenyl diphosphate is bound by residues His44 and His77. Cys99 serves as a coordination point for [4Fe-4S] cluster. His127 lines the (2E)-4-hydroxy-3-methylbut-2-enyl diphosphate pocket. Position 127 (His127) interacts with dimethylallyl diphosphate. His127 is a binding site for isopentenyl diphosphate. Glu129 serves as the catalytic Proton donor. Residue Thr167 participates in (2E)-4-hydroxy-3-methylbut-2-enyl diphosphate binding. Cys197 lines the [4Fe-4S] cluster pocket. (2E)-4-hydroxy-3-methylbut-2-enyl diphosphate contacts are provided by Ser225, Ser226, Asn227, and Ser269. Positions 225, 226, 227, and 269 each coordinate dimethylallyl diphosphate. Isopentenyl diphosphate contacts are provided by Ser225, Ser226, Asn227, and Ser269.

The protein belongs to the IspH family. [4Fe-4S] cluster is required as a cofactor.

The enzyme catalyses isopentenyl diphosphate + 2 oxidized [2Fe-2S]-[ferredoxin] + H2O = (2E)-4-hydroxy-3-methylbut-2-enyl diphosphate + 2 reduced [2Fe-2S]-[ferredoxin] + 2 H(+). It carries out the reaction dimethylallyl diphosphate + 2 oxidized [2Fe-2S]-[ferredoxin] + H2O = (2E)-4-hydroxy-3-methylbut-2-enyl diphosphate + 2 reduced [2Fe-2S]-[ferredoxin] + 2 H(+). It participates in isoprenoid biosynthesis; dimethylallyl diphosphate biosynthesis; dimethylallyl diphosphate from (2E)-4-hydroxy-3-methylbutenyl diphosphate: step 1/1. The protein operates within isoprenoid biosynthesis; isopentenyl diphosphate biosynthesis via DXP pathway; isopentenyl diphosphate from 1-deoxy-D-xylulose 5-phosphate: step 6/6. Functionally, catalyzes the conversion of 1-hydroxy-2-methyl-2-(E)-butenyl 4-diphosphate (HMBPP) into a mixture of isopentenyl diphosphate (IPP) and dimethylallyl diphosphate (DMAPP). Acts in the terminal step of the DOXP/MEP pathway for isoprenoid precursor biosynthesis. In Rhodopirellula baltica (strain DSM 10527 / NCIMB 13988 / SH1), this protein is 4-hydroxy-3-methylbut-2-enyl diphosphate reductase.